The primary structure comprises 309 residues: Serine/threonine-protein phosphatase 2A catalytic subunit alpha isoform (309 aa).

Positions 57, 59, 85, and 117 each coordinate Mn(2+). Zn(2+) is bound by residues aspartate 57, histidine 59, and aspartate 85. Fe(3+) contacts are provided by aspartate 85 and asparagine 117. Histidine 118 acts as the Proton donor in catalysis. 2 residues coordinate Mn(2+): histidine 167 and histidine 241. Fe(3+)-binding residues include histidine 167 and histidine 241. Phosphotyrosine is present on tyrosine 307. The residue at position 309 (leucine 309) is a Leucine methyl ester.

This sequence belongs to the PPP phosphatase family. PP-1 subfamily. In terms of assembly, PP2A consists of a common heterodimeric core enzyme composed of PPP2CA, a 36 kDa catalytic subunit (subunit C), and PPP2R1A, a 65 kDa constant regulatory subunit (PR65 or subunit A), that associates with a variety of regulatory subunits. Proteins that associate with the core dimer include three families of regulatory subunits B (the R2/B/PR55/B55, R3/B''/PR72/PR130/PR59 and R5/B'/B56 families), the 48 kDa variable regulatory subunit, viral proteins, and cell signaling molecules. Interacts with the PP2A A subunit PPP2R1A. Interacts with the regulatory subunit PPP2R2A. Interacts (via C-terminus) with PTPA. Interacts with NXN; the interaction is direct. Interacts with KCTD20. Interacts with BTBD10. Interacts with SGO1 and SGO2. Interacts with RAF1. Interaction with IGBP1 protects unassembled PPP2CA from degradative ubiquitination. Interacts with GSK3B (via C2 domain). Interacts with MFHAS1; retains PPP2CA into the cytoplasm and excludes it from the nucleus. Interacts with PABIR1/FAM122A. Interacts with ADCY8; interaction is phosphatase activity-dependent; antagonizes interaction between ADCY8 and calmodulin. Interacts with CRTC3 (when phosphorylated at 'Ser-391'). Interacts with SPRY2; the interaction is inhibited by TESK1 interaction with SPRY2, possibly by vesicular sequestration of SPRY2. Interacts with TRAF3IP3. Interacts with AMBRA1 (via PxP motifs); enhancing interaction between PPP2CA and MYC or FOXO3. Forms a complex with AMBRA1 and BECN1; AMBRA1 and BECN1 components of the complex regulate MYC stability via different pathways. Part of the core of STRIPAK complexes composed of PP2A catalytic and scaffolding subunits, the striatins (PP2A regulatory subunits), the striatin-associated proteins MOB4, STRIP1 and STRIP2, PDCD10 and members of the STE20 kinases, such as STK24 and STK26. Phosphatase component of the Integrator-PP2A (INTAC) complex, composed of the Integrator core complex and protein phosphatase 2A subunits PPP2CA and PPP2R1A. It depends on Mn(2+) as a cofactor. Fe(3+) serves as cofactor. The cofactor is Zn(2+). Post-translationally, reversibly methyl esterified on Leu-309 by leucine carboxyl methyltransferase 1 (Lcmt1) and protein phosphatase methylesterase 1 (Ppme1). Carboxyl methylation influences the affinity of the catalytic subunit for the different regulatory subunits, thereby modulating the PP2A holoenzyme's substrate specificity, enzyme activity and cellular localization. Phosphorylation of either threonine (by autophosphorylation-activated protein kinase) or tyrosine results in inactivation of the phosphatase. Auto-dephosphorylation has been suggested as a mechanism for reactivation. In terms of processing, polyubiquitinated, leading to its degradation by the proteasome.

The protein resides in the cytoplasm. The protein localises to the nucleus. It localises to the chromosome. Its subcellular location is the centromere. It is found in the cytoskeleton. The protein resides in the spindle pole. It carries out the reaction O-phospho-L-seryl-[protein] + H2O = L-seryl-[protein] + phosphate. The catalysed reaction is O-phospho-L-threonyl-[protein] + H2O = L-threonyl-[protein] + phosphate. Inhibited by the interaction between PPP2R2A and ARPP19; this inhibition is enhanced when ARPP19 is phosphorylated. Inhibited by the interaction between PPP2R2A and PABIR1/FAM122A. Its function is as follows. Catalytic subunit of protein phosphatase 2A (PP2A), a serine/threonine phosphatase involved in the regulation of a wide variety of enzymes, signal transduction pathways, and cellular events. PP2A is the major phosphatase for microtubule-associated proteins (MAPs). PP2A can modulate the activity of phosphorylase B kinase casein kinase 2, mitogen-stimulated S6 kinase, and MAP-2 kinase. Cooperates with SGO2 to protect centromeric cohesin from separase-mediated cleavage in oocytes specifically during meiosis I. Can dephosphorylate various proteins, such as AXIN1, p53/TP53, PIM3, WEE1. Activates RAF1 by dephosphorylating it at 'Ser-259'. Mediates dephosphorylation of WEE1, preventing its ubiquitin-mediated proteolysis, increasing WEE1 protein levels, and promoting the G2/M checkpoint. Mediates dephosphorylation of MYC; promoting its ubiquitin-mediated proteolysis: interaction with AMBRA1 enhances interaction between PPP2CA and MYC. Mediates dephosphorylation of FOXO3; promoting its stabilization: interaction with AMBRA1 enhances interaction between PPP2CA and FOXO3. Catalyzes dephosphorylation of the pyrin domain of NLRP3, promoting assembly of the NLRP3 inflammasome. Together with RACK1 adapter, mediates dephosphorylation of AKT1 at 'Ser-473', preventing AKT1 activation and AKT-mTOR signaling pathway. Dephosphorylation of AKT1 is essential for regulatory T-cells (Treg) homeostasis and stability. Catalyzes dephosphorylation of PIM3, promotinh PIM3 ubiquitination and proteasomal degradation. Part of the striatin-interacting phosphatase and kinase (STRIPAK) complexes. STRIPAK complexes have critical roles in protein (de)phosphorylation and are regulators of multiple signaling pathways including Hippo, MAPK, nuclear receptor and cytoskeleton remodeling. Different types of STRIPAK complexes are involved in a variety of biological processes such as cell growth, differentiation, apoptosis, metabolism and immune regulation. Key mediator of a quality checkpoint during transcription elongation as part of the Integrator-PP2A (INTAC) complex. The INTAC complex drives premature transcription termination of transcripts that are unfavorably configured for transcriptional elongation: within the INTAC complex, PPP2CA catalyzes dephosphorylation of the C-terminal domain (CTD) of Pol II subunit POLR2A/RPB1 and SUPT5H/SPT5, thereby preventing transcriptional elongation. The sequence is that of Serine/threonine-protein phosphatase 2A catalytic subunit alpha isoform (Ppp2ca) from Rattus norvegicus (Rat).